The following is a 1237-amino-acid chain: U3 small nucleolar RNA-associated protein 22 (1237 aa).

The tract at residues methionine 1–glycine 78 is disordered. 2 positions are modified to phosphoserine: serine 10 and serine 58. Threonine 60 carries the post-translational modification Phosphothreonine. The segment covering serine 61–glycine 78 has biased composition (polar residues). The residue at position 64 (serine 64) is a Phosphoserine.

Belongs to the NRAP family. As to quaternary structure, interacts with snoRNA U3. Interacts with MPP10. Component of the ribosomal small subunit (SSU) processome composed of at least 40 protein subunits and snoRNA U3. Interacts with UBP10.

It is found in the nucleus. The protein resides in the nucleolus. Its function is as follows. Involved in nucleolar processing of pre-18S ribosomal RNA and ribosome assembly. The chain is U3 small nucleolar RNA-associated protein 22 (UTP22) from Saccharomyces cerevisiae (strain ATCC 204508 / S288c) (Baker's yeast).